The primary structure comprises 122 residues: NADH-quinone oxidoreductase subunit A (122 aa).

The next 3 helical transmembrane spans lie at 10 to 30 (MIVL…LTLG), 66 to 86 (IFAL…PWAV), and 91 to 111 (LGLF…VGLA).

This sequence belongs to the complex I subunit 3 family. NDH-1 is composed of 14 different subunits. Subunits NuoA, H, J, K, L, M, N constitute the membrane sector of the complex.

It is found in the cell membrane. It carries out the reaction a quinone + NADH + 5 H(+)(in) = a quinol + NAD(+) + 4 H(+)(out). NDH-1 shuttles electrons from NADH, via FMN and iron-sulfur (Fe-S) centers, to quinones in the respiratory chain. The immediate electron acceptor for the enzyme in this species is believed to be a menaquinone. Couples the redox reaction to proton translocation (for every two electrons transferred, four hydrogen ions are translocated across the cytoplasmic membrane), and thus conserves the redox energy in a proton gradient. In Bacillus thuringiensis subsp. konkukian (strain 97-27), this protein is NADH-quinone oxidoreductase subunit A.